The following is a 319-amino-acid chain: Methionyl-tRNA formyltransferase (319 aa).

(6S)-5,6,7,8-tetrahydrofolate is bound at residue S114–P117.

It belongs to the Fmt family.

The enzyme catalyses L-methionyl-tRNA(fMet) + (6R)-10-formyltetrahydrofolate = N-formyl-L-methionyl-tRNA(fMet) + (6S)-5,6,7,8-tetrahydrofolate + H(+). Attaches a formyl group to the free amino group of methionyl-tRNA(fMet). The formyl group appears to play a dual role in the initiator identity of N-formylmethionyl-tRNA by promoting its recognition by IF2 and preventing the misappropriation of this tRNA by the elongation apparatus. The chain is Methionyl-tRNA formyltransferase from Acinetobacter baylyi (strain ATCC 33305 / BD413 / ADP1).